The chain runs to 258 residues: Small ribosomal subunit protein uS2 (258 aa).

It belongs to the universal ribosomal protein uS2 family.

The polypeptide is Small ribosomal subunit protein uS2 (Streptococcus suis (strain 98HAH33)).